The following is a 548-amino-acid chain: Glucose-6-phosphate isomerase (548 aa).

The active-site Proton donor is the Glu-355. Catalysis depends on residues His-386 and Lys-511.

The protein belongs to the GPI family.

It localises to the cytoplasm. It catalyses the reaction alpha-D-glucose 6-phosphate = beta-D-fructose 6-phosphate. The protein operates within carbohydrate biosynthesis; gluconeogenesis. It participates in carbohydrate degradation; glycolysis; D-glyceraldehyde 3-phosphate and glycerone phosphate from D-glucose: step 2/4. Catalyzes the reversible isomerization of glucose-6-phosphate to fructose-6-phosphate. This Wigglesworthia glossinidia brevipalpis protein is Glucose-6-phosphate isomerase.